The sequence spans 1023 residues: 2-oxoglutarate dehydrogenase complex component E1 (1023 aa).

Residues 1–40 constitute a mitochondrion transit peptide; sequence MFHLRTCAAKLRPLTASQTVKTFSQNRPAAARTFQQIRCY. An N6-succinyllysine modification is found at K74. Residue S100 is modified to Phosphoserine. Ca(2+) contacts are provided by H143, D156, and D158. R312 provides a ligand contact to thiamine diphosphate. K401 is modified (N6-acetyllysine). D411, N444, and I446 together coordinate thiamine diphosphate. Residues D411, N444, and I446 each coordinate Mg(2+). K534 participates in a covalent cross-link: Glycyl lysine isopeptide (Lys-Gly) (interchain with G-Cter in ubiquitin). K564 carries the N6-succinyllysine modification. A thiamine diphosphate-binding site is contributed by Q676. Residue K970 is modified to N6-acetyllysine.

It belongs to the alpha-ketoglutarate dehydrogenase family. In terms of assembly, homodimer. The 2-oxoglutarate dehydrogenase complex is composed of OGDH (2-oxoglutarate dehydrogenase; E1), DLST (dihydrolipoamide succinyltransferase; E2), DLD (dihydrolipoamide dehydrogenase; E3) and the assembly factor KGD4. It contains multiple copies of the three enzymatic components (E1, E2 and E3). In the nucleus, the 2-oxoglutarate dehydrogenase complex associates with KAT2A. Interacts with ABHD11; this interaction maintains the functional lipoylation of the 2-oxoglutarate dehydrogenase complex. The cofactor is thiamine diphosphate. Requires Mg(2+) as cofactor.

The protein resides in the mitochondrion. It localises to the nucleus. The enzyme catalyses N(6)-[(R)-lipoyl]-L-lysyl-[protein] + 2-oxoglutarate + H(+) = N(6)-[(R)-S(8)-succinyldihydrolipoyl]-L-lysyl-[protein] + CO2. With respect to regulation, calcium ions and ADP stimulate, whereas ATP and NADH reduce catalytic activity. Its function is as follows. 2-oxoglutarate dehydrogenase (E1o) component of the 2-oxoglutarate dehydrogenase complex (OGDHC). Participates in the first step, rate limiting for the overall conversion of 2-oxoglutarate to succinyl-CoA and CO(2) catalyzed by the whole OGDHC. Catalyzes the irreversible decarboxylation of 2-oxoglutarate (alpha-ketoglutarate) via the thiamine diphosphate (ThDP) cofactor and subsequent transfer of the decarboxylated acyl intermediate on an oxidized dihydrolipoyl group that is covalently amidated to the E2 enzyme (dihydrolipoyllysine-residue succinyltransferase or DLST). Plays a key role in the Krebs (citric acid) cycle, which is a common pathway for oxidation of fuel molecules, including carbohydrates, fatty acids, and amino acids. Can catalyze the decarboxylation of 2-oxoadipate in vitro, but at a much lower rate than 2-oxoglutarate. Mainly active in the mitochondrion. A fraction of the 2-oxoglutarate dehydrogenase complex also localizes in the nucleus and is required for lysine succinylation of histones: associates with KAT2A on chromatin and provides succinyl-CoA to histone succinyltransferase KAT2A. This is 2-oxoglutarate dehydrogenase complex component E1 from Macaca fascicularis (Crab-eating macaque).